A 154-amino-acid chain; its full sequence is MKVMEGNLVGTGLKIAIVISRFNEFITSKLLSGAMDGLKRHGVNENDVTVAWVPGAFEIPLIAKKLAESRQYDAVIALGAVIRGATSHYDYVCNEVAKGVSHAALSTGTPVIFGVLTTDTIEQAIERAGTKAGNKGWEAAVSAIEMANLLRTFA.

5-amino-6-(D-ribitylamino)uracil is bound by residues Phe22, 56 to 58 (AFE), and 80 to 82 (AVI). 85–86 (AT) contributes to the (2S)-2-hydroxy-3-oxobutyl phosphate binding site. Catalysis depends on His88, which acts as the Proton donor. Phe113 serves as a coordination point for 5-amino-6-(D-ribitylamino)uracil. Position 127 (Arg127) interacts with (2S)-2-hydroxy-3-oxobutyl phosphate.

This sequence belongs to the DMRL synthase family. In terms of assembly, forms an icosahedral capsid composed of 60 subunits, arranged as a dodecamer of pentamers.

The enzyme catalyses (2S)-2-hydroxy-3-oxobutyl phosphate + 5-amino-6-(D-ribitylamino)uracil = 6,7-dimethyl-8-(1-D-ribityl)lumazine + phosphate + 2 H2O + H(+). Its pathway is cofactor biosynthesis; riboflavin biosynthesis; riboflavin from 2-hydroxy-3-oxobutyl phosphate and 5-amino-6-(D-ribitylamino)uracil: step 1/2. Its function is as follows. Catalyzes the formation of 6,7-dimethyl-8-ribityllumazine by condensation of 5-amino-6-(D-ribitylamino)uracil with 3,4-dihydroxy-2-butanone 4-phosphate. This is the penultimate step in the biosynthesis of riboflavin. In Geobacillus sp. (strain WCH70), this protein is 6,7-dimethyl-8-ribityllumazine synthase.